The primary structure comprises 96 residues: Beta-defensin 132 (96 aa).

The N-terminal stretch at 1–22 (MKFLLLVLAALRFLTQVIPASG) is a signal peptide. Cystine bridges form between Cys27-Cys55, Cys35-Cys49, and Cys39-Cys56. Residues 74-96 (HWQSRRRNTQRKDKKQQTTVTSS) are disordered. Over residues 76-87 (QSRRRNTQRKDK) the composition is skewed to basic residues.

Belongs to the beta-defensin family.

It localises to the secreted. Has antibacterial activity. The protein is Beta-defensin 132 (DEFB132) of Hylobates lar (Lar gibbon).